Reading from the N-terminus, the 480-residue chain is RuvB-like helicase 2 (480 aa).

73 to 80 (GEPSTGKT) is an ATP binding site.

This sequence belongs to the RuvB family. In terms of assembly, forms homohexameric rings. May form a dodecamer with rept made of two stacked hexameric rings. Component of the chromatin remodeling Ino80 complex.

Its subcellular location is the nucleus. It catalyses the reaction ATP + H2O = ADP + phosphate + H(+). In terms of biological role, acts as a transcriptional coactivator in Wg signaling caused by altered arm signaling. Pont and rept interfere antagonistically with nuclear arm signaling function, and are required to enhance or reduce arm activity, respectively. Also an essential cofactor for the normal function of Myc; required for cellular proliferation and growth. Proposed core component of the chromatin remodeling Ino80 complex which is involved in transcriptional regulation, DNA replication and probably DNA repair. This chain is RuvB-like helicase 2, found in Drosophila pseudoobscura pseudoobscura (Fruit fly).